The following is a 490-amino-acid chain: Cytochrome P450 2C55 (490 aa).

Residue C435 participates in heme binding.

It belongs to the cytochrome P450 family. Heme serves as cofactor.

The protein resides in the endoplasmic reticulum membrane. It localises to the microsome membrane. The catalysed reaction is an organic molecule + reduced [NADPH--hemoprotein reductase] + O2 = an alcohol + oxidized [NADPH--hemoprotein reductase] + H2O + H(+). Functionally, metabolizes arachidonic acid mainly to 19-hydroxyeicosatetraenoic acid (HETE). The chain is Cytochrome P450 2C55 (Cyp2c55) from Rattus norvegicus (Rat).